Reading from the N-terminus, the 284-residue chain is MEMO1 family protein YG5714_2180 (284 aa).

Belongs to the MEMO1 family.

This Saccharolobus islandicus (strain Y.G.57.14 / Yellowstone #1) (Sulfolobus islandicus) protein is MEMO1 family protein YG5714_2180.